The sequence spans 278 residues: 4-deoxy-L-threo-5-hexosulose-uronate ketol-isomerase (278 aa).

Zn(2+) contacts are provided by His-196, His-198, Glu-203, and His-245.

Belongs to the KduI family. In terms of assembly, homohexamer. Zn(2+) serves as cofactor.

The enzyme catalyses 5-dehydro-4-deoxy-D-glucuronate = 3-deoxy-D-glycero-2,5-hexodiulosonate. It participates in glycan metabolism; pectin degradation; 2-dehydro-3-deoxy-D-gluconate from pectin: step 4/5. Its function is as follows. Catalyzes the isomerization of 5-dehydro-4-deoxy-D-glucuronate to 3-deoxy-D-glycero-2,5-hexodiulosonate. The chain is 4-deoxy-L-threo-5-hexosulose-uronate ketol-isomerase from Escherichia coli (strain K12 / MC4100 / BW2952).